Consider the following 259-residue polypeptide: Thrombin-like enzyme gyroxin B1.7 (259 aa).

An N-terminal signal peptide occupies residues 1–18 (MVLIRVLANLLILQLSYA). Positions 19 to 259 (QKSSELVIGG…AGNTAVTCPP (241 aa)) are excised as a propeptide. The 226-residue stretch at 25–250 (VIGGDECNIN…DTEWIQSIIA (226 aa)) folds into the Peptidase S1 domain. 5 disulfide bridges follow: Cys31/Cys162, Cys49/Cys65, Cys141/Cys211, Cys173/Cys190, and Cys201/Cys226. Residue His64 is the Charge relay system of the active site. A glycan (N-linked (GlcNAc...) asparagine) is linked at Asn102. Residue Asp109 is the Charge relay system of the active site. Ser205 (charge relay system) is an active-site residue.

It belongs to the peptidase S1 family. Snake venom subfamily. Monomer. As to expression, expressed by the venom gland.

It localises to the secreted. Its function is as follows. Thrombin-like snake venom serine protease. Displays a specificity similar to trypsin. Releases only fibrinopeptide A in the conversion of fibrinogen to fibrin. Shows coagulant, esterase and amidase activities. Reversibly increases the permeability of the blood brain barrier (BBB) in mice. Induces the barrel rotation syndrome in mice, which is manifested by gyroxin-like, rapid rolling motions. This syndrome may be due to its effect on BBB permeability, and certainly also to other actions affecting endogenous substrates present in the endothelium, nervous tissues or blood. The polypeptide is Thrombin-like enzyme gyroxin B1.7 (Crotalus durissus terrificus (South American rattlesnake)).